Reading from the N-terminus, the 494-residue chain is Glycogen synthase (494 aa).

K24 provides a ligand contact to ADP-alpha-D-glucose.

Belongs to the glycosyltransferase 1 family. Bacterial/plant glycogen synthase subfamily.

It catalyses the reaction [(1-&gt;4)-alpha-D-glucosyl](n) + ADP-alpha-D-glucose = [(1-&gt;4)-alpha-D-glucosyl](n+1) + ADP + H(+). It participates in glycan biosynthesis; glycogen biosynthesis. Functionally, synthesizes alpha-1,4-glucan chains using ADP-glucose. In Aromatoleum aromaticum (strain DSM 19018 / LMG 30748 / EbN1) (Azoarcus sp. (strain EbN1)), this protein is Glycogen synthase.